A 109-amino-acid chain; its full sequence is Large ribosomal subunit protein bL19 (109 aa).

It belongs to the bacterial ribosomal protein bL19 family.

This protein is located at the 30S-50S ribosomal subunit interface and may play a role in the structure and function of the aminoacyl-tRNA binding site. The chain is Large ribosomal subunit protein bL19 from Rubrobacter xylanophilus (strain DSM 9941 / JCM 11954 / NBRC 16129 / PRD-1).